A 381-amino-acid polypeptide reads, in one-letter code: Ribosome assembly 1 protein (381 aa).

An N-acetylmethionine modification is found at Met1. 3 disordered regions span residues 1–38 (MNYNNFENSKGDGHSRLPKPTYSGTLSDGYDESKIKRQ), 164–216 (KDTF…DRDE), and 350–381 (FGSSEDNNKNHYKPNYKNRKPNLSRANFTRNK). The residue at position 172 (Ser172) is a Phosphoserine. Over residues 359 to 371 (NHYKPNYKNRKPN) the composition is skewed to basic residues.

The protein localises to the nucleus. Functionally, involved in a late nucleoplasmic step of 60S ribosomal subunit assembly. In Saccharomyces cerevisiae (strain ATCC 204508 / S288c) (Baker's yeast), this protein is Ribosome assembly 1 protein (RSA1).